Consider the following 260-residue polypeptide: Large ribosomal subunit protein uL2 (260 aa).

The interval 1 to 24 (MGRVIRAQRKGAGSVFKSHTHHRK) is disordered.

Belongs to the universal ribosomal protein uL2 family.

It is found in the cytoplasm. The polypeptide is Large ribosomal subunit protein uL2 (RPL8) (Solanum lycopersicum (Tomato)).